The primary structure comprises 633 residues: Carbon catabolite-derepressing protein kinase (633 aa).

Residues 1–16 (MSSNNNTNTAPANANS) show a composition bias toward low complexity. Residues 1–46 (MSSNNNTNTAPANANSSHHHHHHHHHHHHHGHGGSNSTLNNPKSSL) form a disordered region. A compositionally biased stretch (basic residues) spans 17–32 (SHHHHHHHHHHHHHGH). In terms of domain architecture, Protein kinase spans 55-306 (YQIVKTLGEG…IHEIMQDDWF (252 aa)). Residues 61-69 (LGEGSFGKV) and K84 contribute to the ATP site. D177 (proton acceptor) is an active-site residue. T210 carries the post-translational modification Phosphothreonine; by autocatalysis. An auto-inhibitory domain (AID) region spans residues 313–392 (YLLPPDLKPH…YMLIKENKSL (80 aa)). Residues 317–345 (PDLKPHPEEENENNDSKKDGSSPDNDEID) are disordered. Residues 319–337 (LKPHPEEENENNDSKKDGS) show a composition bias toward basic and acidic residues. Residues 348-389 (LVNILSSTMGYEKDEIYESLESSEDTPAFNEIRDAYMLIKEN) enclose the UBA domain. Positions 409 to 434 (FLSQSPPTFQQQSKSHQKSQVDHETA) are disordered. Residue S413 is modified to Phosphoserine. K461 participates in a covalent cross-link: Glycyl lysine isopeptide (Lys-Gly) (interchain with G-Cter in ubiquitin). Phosphoserine is present on S487. K549 participates in a covalent cross-link: Glycyl lysine isopeptide (Lys-Gly) (interchain with G-Cter in SUMO). Position 632 is a phosphoserine (S632).

Belongs to the protein kinase superfamily. CAMK Ser/Thr protein kinase family. SNF1 subfamily. As to quaternary structure, component of the AMP-activated protein kinase complex also known as the SNF1 kinase complex (Snf1c), a heterotrimeric complex composed of an alpha subunit (SNF1), a regulatory subunit beta (GAL83 and substoichiometric alternate beta subunits SIP1 and SIP2), and a regulatory subunit gamma (SNF4). Interacts with the transcriptional activator SIP4. Interacts with SAK1. Interacts with CTK1: Interacts with adenylate cyclase CYR1. Phosphorylation at Thr-210 in response to glucose limitation leads to activation of kinase activity. ADP, but not AMP, protects the enzyme from dephosphorylation at Thr-210 by GLC7. In terms of processing, sumoylation by the SUMO (E3) ligase MMS21 leads to inhibition by interaction of SUMO attached to Lys-549 with a SUMO-interacting sequence motif located near the active site of SNF1, and by targeting SNF1 for glucose-induced destruction via the SLX5-SLX8 (SUMO-directed) ubiquitin ligase.

The protein resides in the cytoplasm. The protein localises to the nucleus. It is found in the nucleus membrane. The enzyme catalyses L-seryl-[protein] + ATP = O-phospho-L-seryl-[protein] + ADP + H(+). The catalysed reaction is L-threonyl-[protein] + ATP = O-phospho-L-threonyl-[protein] + ADP + H(+). Its activity is regulated as follows. The kinase activity is positively regulated by SNF4 via sequestration of the SNF1 auto-inhibitory domain (AID). Functionally, serine/threonine protein kinase essential for release from glucose repression. Catalytic subunit of the AMP-activated protein kinase complex also known as the SNF1 kinase complex (Snf1c), a central regulator of cellular energy homeostasis, which, in response to a fall in intracellular ATP levels, activates energy-producing pathways and inhibits energy-consuming processes. The complex phosphorylates histone H3 to form H3S10ph, which promotes H3K14ac formation, leading to transcriptional activation through TBP recruitment to the promoters. The complex also negatively regulates the HOG1 MAPK pathway in ER stress response including unfolded protein response (UPR). Under nutrient/energy depletion, the complex phosphorylates and activates PAS kinase PSK1 which in turn activates PBS1, leading to the inhibition of the TORC1 signaling pathway. SNF1 also interacts and phosphorylates adenylate cyclase CYR1 and negatively regulates the protein kinase A signaling pathway. Also phosphorylates and regulates the transcriptional activator CAT8. In Saccharomyces cerevisiae (strain ATCC 204508 / S288c) (Baker's yeast), this protein is Carbon catabolite-derepressing protein kinase.